The chain runs to 245 residues: S-methyl-5'-thioinosine phosphorylase (245 aa).

Phosphate contacts are provided by residues threonine 10 and arginine 52 to histidine 53. Methionine 185 contributes to the substrate binding site. Threonine 186 lines the phosphate pocket. Asparagine 209–alanine 211 is a substrate binding site.

The protein belongs to the PNP/MTAP phosphorylase family. MTAP subfamily. In terms of assembly, homotrimer.

It carries out the reaction S-methyl-5'-thioinosine + phosphate = 5-(methylsulfanyl)-alpha-D-ribose 1-phosphate + hypoxanthine. The protein operates within purine metabolism; purine nucleoside salvage. Catalyzes the reversible phosphorylation of S-methyl-5'-thioinosine (MTI) to hypoxanthine and 5-methylthioribose-1-phosphate. Involved in the breakdown of S-methyl-5'-thioadenosine (MTA), a major by-product of polyamine biosynthesis. Catabolism of (MTA) occurs via deamination to MTI and phosphorolysis to hypoxanthine. Involved in quorum sensing. The polypeptide is S-methyl-5'-thioinosine phosphorylase (Pseudomonas aeruginosa (strain ATCC 15692 / DSM 22644 / CIP 104116 / JCM 14847 / LMG 12228 / 1C / PRS 101 / PAO1)).